We begin with the raw amino-acid sequence, 100 residues long: Large ribosomal subunit protein bL27 (100 aa).

Residues 1-13 (MNKLYWLTDLQLF) constitute a propeptide that is removed on maturation. A compositionally biased stretch (basic and acidic residues) spans 18–29 (GVDSSKNGRDSN). Residues 18 to 39 (GVDSSKNGRDSNPKYLGAKLGD) form a disordered region.

This sequence belongs to the bacterial ribosomal protein bL27 family. The N-terminus is cleaved by ribosomal processing cysteine protease Prp.

This Ureaplasma urealyticum serovar 10 (strain ATCC 33699 / Western) protein is Large ribosomal subunit protein bL27.